The sequence spans 163 residues: Nucleotide-binding protein C8J_0350 (163 aa).

It belongs to the YajQ family.

Functionally, nucleotide-binding protein. The protein is Nucleotide-binding protein C8J_0350 of Campylobacter jejuni subsp. jejuni serotype O:6 (strain 81116 / NCTC 11828).